A 657-amino-acid polypeptide reads, in one-letter code: Protein FAM200B (657 aa).

It belongs to the FAM200 family.

The chain is Protein FAM200B from Homo sapiens (Human).